Here is a 280-residue protein sequence, read N- to C-terminus: MTALVLDGKLCAKETENRLQAQVTELKERTGCTPILATILVGADPASATYVKMKGNACRRVGMDSMAIELPESTTTEQLLDKINELNNNPDVHGILLQHPVPAQVDERLCFDAIAAHKDVDGVTCLGFGRMAMKEPAYGAATPAGIMRLLAAYDIQLEGKHVVVVGRSPILGKPMAMMMLNANATVTMCHSRTQNLPEFVKQADVIVGAVGKPELIKADWIKDGAIVVDAGYHPGGIGDIELGPLKDRVAAYTPVPGGVGPMTINTLILQTLESGLKQLG.

NADP(+) is bound by residues 166–168 (GRS) and S191.

It belongs to the tetrahydrofolate dehydrogenase/cyclohydrolase family. As to quaternary structure, homodimer.

The enzyme catalyses (6R)-5,10-methylene-5,6,7,8-tetrahydrofolate + NADP(+) = (6R)-5,10-methenyltetrahydrofolate + NADPH. It catalyses the reaction (6R)-5,10-methenyltetrahydrofolate + H2O = (6R)-10-formyltetrahydrofolate + H(+). Its pathway is one-carbon metabolism; tetrahydrofolate interconversion. In terms of biological role, catalyzes the oxidation of 5,10-methylenetetrahydrofolate to 5,10-methenyltetrahydrofolate and then the hydrolysis of 5,10-methenyltetrahydrofolate to 10-formyltetrahydrofolate. This Marinomonas sp. (strain MWYL1) protein is Bifunctional protein FolD.